The chain runs to 701 residues: Dynein axonemal intermediate chain 1 (701 aa).

Disordered stretches follow at residues 1–45 (MPSK…VRPP) and 119–165 (EMVA…DIPA). Phosphoserine is present on residues S124 and S127. Residues 136–155 (ENLEEEEEPKEGEGEAEAEA) show a composition bias toward acidic residues. WD repeat units follow at residues 382–422 (SSES…SQPC), 431–474 (KHTD…LVHI), 539–579 (AHNM…PMFI), 581–621 (DLNS…YEAI), and 629–668 (KKKN…RKMP).

This sequence belongs to the dynein intermediate chain family. In terms of assembly, consists of at least two heavy chains and a number of intermediate and light chains. Interacts with BICD2. Interacts with CFAP45 and CFAP52. Interacts with CFAP53.

Its subcellular location is the cytoplasm. It localises to the cytoskeleton. The protein localises to the cilium axoneme. Part of the dynein complex of respiratory cilia. The polypeptide is Dynein axonemal intermediate chain 1 (Dnai1) (Mus musculus (Mouse)).